We begin with the raw amino-acid sequence, 420 residues long: Diaminobutyrate--2-oxoglutarate transaminase (420 aa).

Residue K271 is modified to N6-(pyridoxal phosphate)lysine.

The protein belongs to the class-III pyridoxal-phosphate-dependent aminotransferase family. It depends on pyridoxal 5'-phosphate as a cofactor.

It carries out the reaction L-2,4-diaminobutanoate + 2-oxoglutarate = L-aspartate 4-semialdehyde + L-glutamate. The protein operates within amine and polyamine biosynthesis; ectoine biosynthesis; L-ectoine from L-aspartate 4-semialdehyde: step 1/3. Its function is as follows. Catalyzes reversively the conversion of L-aspartate beta-semialdehyde (ASA) to L-2,4-diaminobutyrate (DABA) by transamination with L-glutamate. This Streptomyces anulatus (Streptomyces chrysomallus) protein is Diaminobutyrate--2-oxoglutarate transaminase (ectB).